The following is a 367-amino-acid chain: 3-dehydroquinate synthase (367 aa).

Residues 99–103, 123–124, lysine 136, lysine 145, and 163–166 each bind NAD(+); these read GVVGD, TT, and FLRT. Residues glutamate 178, histidine 242, and histidine 259 each coordinate Zn(2+).

This sequence belongs to the sugar phosphate cyclases superfamily. Dehydroquinate synthase family. Co(2+) serves as cofactor. Requires Zn(2+) as cofactor. The cofactor is NAD(+).

It localises to the cytoplasm. It carries out the reaction 7-phospho-2-dehydro-3-deoxy-D-arabino-heptonate = 3-dehydroquinate + phosphate. It functions in the pathway metabolic intermediate biosynthesis; chorismate biosynthesis; chorismate from D-erythrose 4-phosphate and phosphoenolpyruvate: step 2/7. In terms of biological role, catalyzes the conversion of 3-deoxy-D-arabino-heptulosonate 7-phosphate (DAHP) to dehydroquinate (DHQ). The polypeptide is 3-dehydroquinate synthase (Chlorobaculum parvum (strain DSM 263 / NCIMB 8327) (Chlorobium vibrioforme subsp. thiosulfatophilum)).